A 91-amino-acid polypeptide reads, in one-letter code: Antitoxin RelJ (91 aa).

Belongs to the phD/YefM antitoxin family. Homodimer.

Antitoxin component of a type II toxin-antitoxin (TA) system. A probable antitoxin for the putative mRNA interferase RelK. This chain is Antitoxin RelJ (relJ), found in Mycobacterium tuberculosis (strain CDC 1551 / Oshkosh).